A 248-amino-acid polypeptide reads, in one-letter code: Putative transposase YncI (248 aa).

The protein belongs to the transposase 11 family.

This chain is Putative transposase YncI (yncI), found in Escherichia coli (strain K12).